We begin with the raw amino-acid sequence, 118 residues long: Myotrophin (118 aa).

3 ANK repeats span residues 1-30, 34-65, and 67-98; these read MGDK…DVNR, GGRK…NAAD, and HGIT…NVKG.

This sequence belongs to the myotrophin family.

The protein localises to the cytoplasm. Its subcellular location is the nucleus. It is found in the perinuclear region. Functionally, regulates NF-kappa-B transcription factor activity. Promotes growth of cardiomyocytes, but not cardiomyocyte proliferation. Promotes cardiac muscle hypertrophy. Plays a role in the regulation of the growth of actin filaments. Inhibits the activity of the F-actin-capping protein complex. This is Myotrophin (mtpn) from Xenopus laevis (African clawed frog).